A 232-amino-acid chain; its full sequence is Large ribosomal subunit protein uL1 (232 aa).

This sequence belongs to the universal ribosomal protein uL1 family. Part of the 50S ribosomal subunit.

Its function is as follows. Binds directly to 23S rRNA. The L1 stalk is quite mobile in the ribosome, and is involved in E site tRNA release. Protein L1 is also a translational repressor protein, it controls the translation of the L11 operon by binding to its mRNA. The protein is Large ribosomal subunit protein uL1 of Bacillus velezensis (strain DSM 23117 / BGSC 10A6 / LMG 26770 / FZB42) (Bacillus amyloliquefaciens subsp. plantarum).